The primary structure comprises 247 residues: Cell division protein ZapD (247 aa).

Belongs to the ZapD family. Interacts with FtsZ.

It localises to the cytoplasm. Functionally, cell division factor that enhances FtsZ-ring assembly. Directly interacts with FtsZ and promotes bundling of FtsZ protofilaments, with a reduction in FtsZ GTPase activity. This Shigella sonnei (strain Ss046) protein is Cell division protein ZapD.